The chain runs to 902 residues: Glutamate receptor 4 (902 aa).

The signal sequence occupies residues 1–20 (MRIISRQIVLLFSGFWGLAM). Over 22–544 (AFPSSVQIGG…GVFSFLDPLA (523 aa)) the chain is Extracellular. 6 N-linked (GlcNAc...) asparagine glycosylation sites follow: N52, N56, N258, N371, N407, and N414. A disulfide bond links C84 and C331. The L-glutamate site is built by P500, T502, and R507. The chain crosses the membrane as a helical span at residues 545 to 565 (YEIWMCIVFAYIGVSVVLFLV). Residues 566–592 (SRFSPYEWHTEEPEDGKEGPSDQPPNE) lie on the Cytoplasmic side of the membrane. An intramembrane region (helical; Pore-forming) is located at residues 593–608 (FGIFNSLWFSLGAFMQ). An intramembrane segment occupies 609–611 (QGC). A lipid anchor (S-palmitoyl cysteine) is attached at C611. The Cytoplasmic portion of the chain corresponds to 612-617 (DISPRS). Residues 618–638 (LSGRIVGGVWWFFTLIIISSY) form a helical membrane-spanning segment. Topologically, residues 639 to 813 (TANLAAFLTV…DKTSALSLSN (175 aa)) are extracellular. L-glutamate contacts are provided by S676, T677, and E727. An intrachain disulfide couples C740 to C795. Residues 814–834 (VAGVFYILVGGLGLAMLVALI) traverse the membrane as a helical segment. At 835 to 902 (EFCYKSRAEA…GLAVIASDLP (68 aa)) the chain is on the cytoplasmic side. A lipid anchor (S-palmitoyl cysteine) is attached at C837. S862 is subject to Phosphoserine; by PKC/PRKCG.

The protein belongs to the glutamate-gated ion channel (TC 1.A.10.1) family. GRIA4 subfamily. In terms of assembly, homotetramer or heterotetramer of pore-forming glutamate receptor subunits. Tetramers may be formed by the dimerization of dimers. Interacts with EPB41L1 via its C-terminus. Isoform 3 interacts with PICK1. Found in a complex with GRIA1, GRIA2, GRIA3, CNIH2, CNIH3, CACNG2, CACNG3, CACNG4, CACNG5, CACNG7 and CACNG8. Interacts with CACNG5 and PRKCG. Found in a complex with GRIA1, GRIA2, GRIA3, DLG4, CACNG8 and CNIH2. Palmitoylated. Depalmitoylated upon L-glutamate stimulation. ZDHHC3/GODZ specifically palmitoylates Cys-611, which leads to Golgi retention and decreased cell surface expression. In contrast, Cys-837 palmitoylation does not affect cell surface expression but regulates stimulation-dependent endocytosis. In terms of processing, phosphorylated at Ser-862 by PRKCG; phosphorylation increases plasma membrane-associated GRI4 expression.

The protein localises to the cell membrane. It is found in the postsynaptic cell membrane. It localises to the cell projection. Its subcellular location is the dendrite. The enzyme catalyses Ca(2+)(in) = Ca(2+)(out). It carries out the reaction Na(+)(in) = Na(+)(out). The catalysed reaction is Mg(2+)(in) = Mg(2+)(out). Its function is as follows. Ionotropic glutamate receptor that functions as a ligand-gated cation channel, gated by L-glutamate and glutamatergic agonists such as alpha-amino-3-hydroxy-5-methyl-4-isoxazolepropionic acid (AMPA), quisqualic acid, and kainic acid. L-glutamate acts as an excitatory neurotransmitter at many synapses in the central nervous system and plays an important role in fast excitatory synaptic transmission. Binding of the excitatory neurotransmitter L-glutamate induces a conformation change, leading to the opening of the cation channel, and thereby converts the chemical signal to an electrical impulse upon entry of monovalent and divalent cations such as sodium and calcium. The receptor then desensitizes rapidly and enters a transient inactive state, characterized by the presence of bound agonist. In the presence of CACNG8, shows resensitization which is characterized by a delayed accumulation of current flux upon continued application of L-glutamate. This is Glutamate receptor 4 from Macaca fascicularis (Crab-eating macaque).